The following is a 149-amino-acid chain: MDEQEAVFMIERIYVKDISFESPNAPLSFVQTEAPTVDVGLNTASTVVEGMEGLTEVTLTVTVKAKAGESTYFAVEVQQSGLFRVQNIPEEHMPALLAVHCPTILFPYAREVVADLVGRGGFQPLHLHPVNFEALYQQAQTQQQNYTTQ.

Belongs to the SecB family. In terms of assembly, homotetramer, a dimer of dimers. One homotetramer interacts with 1 SecA dimer.

It is found in the cytoplasm. Functionally, one of the proteins required for the normal export of preproteins out of the cell cytoplasm. It is a molecular chaperone that binds to a subset of precursor proteins, maintaining them in a translocation-competent state. It also specifically binds to its receptor SecA. This is Protein-export protein SecB from Acidithiobacillus ferrooxidans (strain ATCC 23270 / DSM 14882 / CIP 104768 / NCIMB 8455) (Ferrobacillus ferrooxidans (strain ATCC 23270)).